A 257-amino-acid chain; its full sequence is Putative carboxymethylenebutenolidase (257 aa).

Catalysis depends on residues C148, D195, and H226.

The protein belongs to the dienelactone hydrolase family.

It carries out the reaction 2-(5-oxo-2,5-dihydrofuran-2-ylidene)acetate + H2O = 4-oxohex-2-enedioate + H(+). The protein is Putative carboxymethylenebutenolidase of Saccharolobus solfataricus (strain ATCC 35092 / DSM 1617 / JCM 11322 / P2) (Sulfolobus solfataricus).